Consider the following 800-residue polypeptide: Fibroblast growth factor receptor 3 (800 aa).

A signal peptide spans 1-20 (MVPLCLLLYLATLVFPPVYS). Residues 21 to 122 (AHLLSPEPTD…YTVKVIDSLS (102 aa)) form the Ig-like C2-type 1 domain. Topologically, residues 21–363 (AHLLSPEPTD…EMEREDDYAD (343 aa)) are extracellular. Residues Cys-55 and Cys-101 are joined by a disulfide bond. N-linked (GlcNAc...) asparagine glycans are attached at residues Asn-77, Asn-90, and Asn-112. Positions 124 to 136 (GDDEDYDEDEDEA) are enriched in acidic residues. The segment at 124-143 (GDDEDYDEDEDEAGNGNAEA) is disordered. 2 Ig-like C2-type domains span residues 144–237 (PYWT…YQLD) and 246–348 (PILQ…AWLT). Cys-169 and Cys-221 are joined by a disulfide. 5 N-linked (GlcNAc...) asparagine glycosylation sites follow: Asn-218, Asn-255, Asn-287, Asn-308, and Asn-321. Cys-268 and Cys-332 are disulfide-bonded. The chain crosses the membrane as a helical span at residues 364-384 (ILIYVTSCVLFILTMVIIILC). The Cytoplasmic portion of the chain corresponds to 385–800 (RMWINTQKTL…HHHSNGVIRT (416 aa)). A Protein kinase domain is found at 460-739 (LTLGKPLGEG…RQLVEDHDRV (280 aa)). Residues 466–474 (LGEGCFGQV) and Lys-496 contribute to the ATP site. Asp-605 (proton acceptor) is an active-site residue. A phosphotyrosine; by autocatalysis mark is found at Tyr-635, Tyr-636, Tyr-712, and Tyr-748. Over residues 764-773 (DSNSTCSSGD) the composition is skewed to polar residues. The disordered stretch occupies residues 764 to 800 (DSNSTCSSGDDSVFAHDPLPEEPCLPKHHHSNGVIRT).

Belongs to the protein kinase superfamily. Tyr protein kinase family. Fibroblast growth factor receptor subfamily. As to quaternary structure, monomer. Homodimer after ligand binding. In terms of processing, autophosphorylated. Binding of FGF family members together with heparan sulfate proteoglycan or heparin promotes receptor dimerization and autophosphorylation on tyrosine residues. Autophosphorylation occurs in trans between the two FGFR molecules present in the dimer.

The protein localises to the cell membrane. The catalysed reaction is L-tyrosyl-[protein] + ATP = O-phospho-L-tyrosyl-[protein] + ADP + H(+). Its activity is regulated as follows. Present in an inactive conformation in the absence of bound ligand. Ligand binding leads to dimerization and activation by autophosphorylation on tyrosine residues. Its function is as follows. Tyrosine-protein kinase that acts as a cell-surface receptor for fibroblast growth factors and plays an essential role in the regulation of cell proliferation, differentiation and apoptosis. Plays an essential role in the regulation of chondrocyte differentiation, proliferation and apoptosis, and is required for normal skeleton development. Regulates both osteogenesis and postnatal bone mineralization by osteoblasts. Promotes apoptosis in chondrocytes, but can also promote cancer cell proliferation. Phosphorylates PLCG1, CBL and FRS2. Ligand binding leads to the activation of several signaling cascades. Activation of PLCG1 leads to the production of the cellular signaling molecules diacylglycerol and inositol 1,4,5-trisphosphate. Phosphorylation of FRS2 triggers recruitment of GRB2, GAB1, PIK3R1 and SOS1, and mediates activation of RAS, MAPK1/ERK2, MAPK3/ERK1 and the MAP kinase signaling pathway, as well as of the AKT1 signaling pathway. This chain is Fibroblast growth factor receptor 3 (fgfr3), found in Danio rerio (Zebrafish).